We begin with the raw amino-acid sequence, 31 residues long: Photosystem II reaction center protein T (31 aa).

A helical transmembrane segment spans residues 3 to 23 (ALVYVFLLVGTLMVIFFAIFF).

The protein belongs to the PsbT family. In terms of assembly, PSII is composed of 1 copy each of membrane proteins PsbA, PsbB, PsbC, PsbD, PsbE, PsbF, PsbH, PsbI, PsbJ, PsbK, PsbL, PsbM, PsbT, PsbX, PsbY, PsbZ, Psb30/Ycf12, at least 3 peripheral proteins of the oxygen-evolving complex and a large number of cofactors. It forms dimeric complexes.

Its subcellular location is the plastid. The protein localises to the chloroplast thylakoid membrane. Its function is as follows. Found at the monomer-monomer interface of the photosystem II (PS II) dimer, plays a role in assembly and dimerization of PSII. PSII is a light-driven water plastoquinone oxidoreductase, using light energy to abstract electrons from H(2)O, generating a proton gradient subsequently used for ATP formation. The protein is Photosystem II reaction center protein T of Gracilaria tenuistipitata var. liui (Red alga).